The sequence spans 245 residues: NAD-dependent protein deacylase (245 aa).

One can recognise a Deacetylase sirtuin-type domain in the interval 1 to 245 (MEAVWESARI…RLSRAMGIDI (245 aa)). 22 to 41 (GAGISAESGIPTFRGKDGLW) contacts NAD(+). Substrate contacts are provided by Tyr-66 and Arg-69. Position 100–103 (100–103 (QNVD)) interacts with NAD(+). Residue His-118 is the Proton acceptor of the active site. Zn(2+) contacts are provided by Cys-126, Cys-129, Cys-146, and Cys-149. NAD(+)-binding positions include 186–188 (GTS), 212–214 (NPE), and Met-241.

This sequence belongs to the sirtuin family. Class III subfamily. Zn(2+) serves as cofactor.

It localises to the cytoplasm. It catalyses the reaction N(6)-acetyl-L-lysyl-[protein] + NAD(+) + H2O = 2''-O-acetyl-ADP-D-ribose + nicotinamide + L-lysyl-[protein]. The enzyme catalyses N(6)-succinyl-L-lysyl-[protein] + NAD(+) + H2O = 2''-O-succinyl-ADP-D-ribose + nicotinamide + L-lysyl-[protein]. Functionally, NAD-dependent lysine deacetylase and desuccinylase that specifically removes acetyl and succinyl groups on target proteins. Modulates the activities of several proteins which are inactive in their acylated form. Deacetylates the N-terminal lysine residue of Alba, the major archaeal chromatin protein and that, in turn, increases Alba's DNA binding affinity, thereby repressing transcription. This Aeropyrum pernix (strain ATCC 700893 / DSM 11879 / JCM 9820 / NBRC 100138 / K1) protein is NAD-dependent protein deacylase.